Reading from the N-terminus, the 483-residue chain is Altronate oxidoreductase (483 aa).

18–29 (IIQFGEGNFLRA) provides a ligand contact to NAD(+).

Belongs to the mannitol dehydrogenase family. UxaB subfamily.

It carries out the reaction D-altronate + NAD(+) = keto-D-tagaturonate + NADH + H(+). The protein operates within carbohydrate metabolism; pentose and glucuronate interconversion. The sequence is that of Altronate oxidoreductase from Escherichia coli O1:K1 / APEC.